We begin with the raw amino-acid sequence, 193 residues long: Acyl carrier protein phosphodiesterase (193 aa).

The protein belongs to the AcpH family.

It carries out the reaction holo-[ACP] + H2O = apo-[ACP] + (R)-4'-phosphopantetheine + H(+). In terms of biological role, converts holo-ACP to apo-ACP by hydrolytic cleavage of the phosphopantetheine prosthetic group from ACP. The protein is Acyl carrier protein phosphodiesterase of Klebsiella pneumoniae subsp. pneumoniae (strain ATCC 700721 / MGH 78578).